The following is a 101-amino-acid chain: Small ribosomal subunit protein uS14 (101 aa).

Belongs to the universal ribosomal protein uS14 family. In terms of assembly, part of the 30S ribosomal subunit. Contacts proteins S3 and S10.

In terms of biological role, binds 16S rRNA, required for the assembly of 30S particles and may also be responsible for determining the conformation of the 16S rRNA at the A site. The polypeptide is Small ribosomal subunit protein uS14 (Pseudomonas putida (strain ATCC 47054 / DSM 6125 / CFBP 8728 / NCIMB 11950 / KT2440)).